The sequence spans 367 residues: Uroporphyrinogen decarboxylase (367 aa).

M1 is subject to N-acetylmethionine. Residues R37, A39, R41, R50, D86, Y164, S219, and H339 each coordinate coproporphyrinogen I. 3 residues coordinate coproporphyrinogen III: R37, A39, and R41. Coproporphyrinogen III is bound by residues D86, Y164, S219, and H339.

Belongs to the uroporphyrinogen decarboxylase family. As to quaternary structure, homodimer.

The protein resides in the cytoplasm. It is found in the cytosol. The catalysed reaction is uroporphyrinogen III + 4 H(+) = coproporphyrinogen III + 4 CO2. The enzyme catalyses uroporphyrinogen I + 4 H(+) = coproporphyrinogen I + 4 CO2. The protein operates within porphyrin-containing compound metabolism; protoporphyrin-IX biosynthesis; coproporphyrinogen-III from 5-aminolevulinate: step 4/4. In terms of biological role, catalyzes the sequential decarboxylation of the four acetate side chains of uroporphyrinogen to form coproporphyrinogen and participates in the fifth step in the heme biosynthetic pathway. Isomer I or isomer III of uroporphyrinogen may serve as substrate, but only coproporphyrinogen III can ultimately be converted to heme. In vitro also decarboxylates pentacarboxylate porphyrinogen I. The chain is Uroporphyrinogen decarboxylase from Mus musculus (Mouse).